The primary structure comprises 262 residues: Hydroxyethylthiazole kinase (262 aa).

M50 contacts substrate. Residues R125 and T171 each contribute to the ATP site. A substrate-binding site is contributed by G198.

The protein belongs to the Thz kinase family. Requires Mg(2+) as cofactor.

The catalysed reaction is 5-(2-hydroxyethyl)-4-methylthiazole + ATP = 4-methyl-5-(2-phosphooxyethyl)-thiazole + ADP + H(+). Its pathway is cofactor biosynthesis; thiamine diphosphate biosynthesis; 4-methyl-5-(2-phosphoethyl)-thiazole from 5-(2-hydroxyethyl)-4-methylthiazole: step 1/1. Catalyzes the phosphorylation of the hydroxyl group of 4-methyl-5-beta-hydroxyethylthiazole (THZ). In Escherichia coli O17:K52:H18 (strain UMN026 / ExPEC), this protein is Hydroxyethylthiazole kinase.